A 423-amino-acid chain; its full sequence is Histidine--tRNA ligase 2 (423 aa).

It belongs to the class-II aminoacyl-tRNA synthetase family. As to quaternary structure, homodimer.

The protein resides in the cytoplasm. The enzyme catalyses tRNA(His) + L-histidine + ATP = L-histidyl-tRNA(His) + AMP + diphosphate + H(+). This Bacillus cereus (strain ATCC 10987 / NRS 248) protein is Histidine--tRNA ligase 2.